We begin with the raw amino-acid sequence, 120 residues long: Seripauperin-24 (120 aa).

The N-terminal stretch at 1–20 is a signal peptide; that stretch reads MVKLTSIAAGVAAIAATASA.

It belongs to the SRP1/TIP1 family. Seripauperin subfamily. In terms of processing, O-glycosylated.

It localises to the secreted. The protein localises to the cell wall. In terms of biological role, component of the cell wall. In Saccharomyces cerevisiae (strain ATCC 204508 / S288c) (Baker's yeast), this protein is Seripauperin-24 (PAU24).